We begin with the raw amino-acid sequence, 845 residues long: Alanine--tRNA ligase (845 aa).

Zn(2+) contacts are provided by His552, His556, Cys653, and His657.

The protein belongs to the class-II aminoacyl-tRNA synthetase family. The cofactor is Zn(2+).

Its subcellular location is the cytoplasm. It catalyses the reaction tRNA(Ala) + L-alanine + ATP = L-alanyl-tRNA(Ala) + AMP + diphosphate. In terms of biological role, catalyzes the attachment of alanine to tRNA(Ala) in a two-step reaction: alanine is first activated by ATP to form Ala-AMP and then transferred to the acceptor end of tRNA(Ala). Also edits incorrectly charged Ser-tRNA(Ala) and Gly-tRNA(Ala) via its editing domain. In Campylobacter hominis (strain ATCC BAA-381 / DSM 21671 / CCUG 45161 / LMG 19568 / NCTC 13146 / CH001A), this protein is Alanine--tRNA ligase.